The primary structure comprises 414 residues: Succinylornithine transaminase (414 aa).

Lys-260 carries the post-translational modification N6-(pyridoxal phosphate)lysine.

Belongs to the class-III pyridoxal-phosphate-dependent aminotransferase family. AstC subfamily. Requires pyridoxal 5'-phosphate as cofactor.

It catalyses the reaction N(2)-succinyl-L-ornithine + 2-oxoglutarate = N-succinyl-L-glutamate 5-semialdehyde + L-glutamate. It functions in the pathway amino-acid degradation; L-arginine degradation via AST pathway; L-glutamate and succinate from L-arginine: step 3/5. Functionally, catalyzes the transamination of N(2)-succinylornithine and alpha-ketoglutarate into N(2)-succinylglutamate semialdehyde and glutamate. Can also act as an acetylornithine aminotransferase. The protein is Succinylornithine transaminase of Yersinia pseudotuberculosis serotype O:1b (strain IP 31758).